A 368-amino-acid polypeptide reads, in one-letter code: tRNA(Met) cytidine acetate ligase (368 aa).

Residues 7-20 (IAEF…HKYL), Gly96, Asn152, and Arg175 contribute to the ATP site.

It belongs to the TmcAL family.

It localises to the cytoplasm. It catalyses the reaction cytidine(34) in elongator tRNA(Met) + acetate + ATP = N(4)-acetylcytidine(34) in elongator tRNA(Met) + AMP + diphosphate. Functionally, catalyzes the formation of N(4)-acetylcytidine (ac(4)C) at the wobble position of elongator tRNA(Met), using acetate and ATP as substrates. First activates an acetate ion to form acetyladenylate (Ac-AMP) and then transfers the acetyl group to tRNA to form ac(4)C34. In Streptococcus pyogenes serotype M3 (strain SSI-1), this protein is tRNA(Met) cytidine acetate ligase.